We begin with the raw amino-acid sequence, 179 residues long: Translation initiation factor IF-3 (179 aa).

It belongs to the IF-3 family. As to quaternary structure, monomer.

It localises to the cytoplasm. Its function is as follows. IF-3 binds to the 30S ribosomal subunit and shifts the equilibrium between 70S ribosomes and their 50S and 30S subunits in favor of the free subunits, thus enhancing the availability of 30S subunits on which protein synthesis initiation begins. The protein is Translation initiation factor IF-3 of Zymomonas mobilis subsp. mobilis (strain ATCC 31821 / ZM4 / CP4).